The primary structure comprises 266 residues: Putative carbamate hydrolase RutD (266 aa).

It belongs to the AB hydrolase superfamily. Hydrolase RutD family.

The enzyme catalyses carbamate + 2 H(+) = NH4(+) + CO2. Its function is as follows. Involved in pyrimidine catabolism. May facilitate the hydrolysis of carbamate, a reaction that can also occur spontaneously. The polypeptide is Putative carbamate hydrolase RutD (Acinetobacter baylyi (strain ATCC 33305 / BD413 / ADP1)).